A 200-amino-acid polypeptide reads, in one-letter code: Outer-membrane lipoprotein carrier protein (200 aa).

An N-terminal signal peptide occupies residues 1–18 (MIGLFLAAPLVLSSAVWA).

This sequence belongs to the LolA family. In terms of assembly, monomer.

It localises to the periplasm. In terms of biological role, participates in the translocation of lipoproteins from the inner membrane to the outer membrane. Only forms a complex with a lipoprotein if the residue after the N-terminal Cys is not an aspartate (The Asp acts as a targeting signal to indicate that the lipoprotein should stay in the inner membrane). The protein is Outer-membrane lipoprotein carrier protein of Photobacterium profundum (strain SS9).